The following is a 210-amino-acid chain: Redox-sensing transcriptional repressor Rex (210 aa).

The segment at residues I16 to F55 is a DNA-binding region (H-T-H motif). G90–G95 is a binding site for NAD(+).

The protein belongs to the transcriptional regulatory Rex family. Homodimer.

It localises to the cytoplasm. In terms of biological role, modulates transcription in response to changes in cellular NADH/NAD(+) redox state. The chain is Redox-sensing transcriptional repressor Rex from Syntrophomonas wolfei subsp. wolfei (strain DSM 2245B / Goettingen).